Here is a 389-residue protein sequence, read N- to C-terminus: Acetylornithine aminotransferase (389 aa).

Residues 104–105 (GT) and Phe131 each bind pyridoxal 5'-phosphate. Residue Arg134 participates in N(2)-acetyl-L-ornithine binding. 216-219 (DEVQ) is a binding site for pyridoxal 5'-phosphate. Lys245 carries the N6-(pyridoxal phosphate)lysine modification. Ser273 is a N(2)-acetyl-L-ornithine binding site. Thr274 provides a ligand contact to pyridoxal 5'-phosphate.

Belongs to the class-III pyridoxal-phosphate-dependent aminotransferase family. ArgD subfamily. As to quaternary structure, homodimer. Pyridoxal 5'-phosphate serves as cofactor.

The protein resides in the cytoplasm. It carries out the reaction N(2)-acetyl-L-ornithine + 2-oxoglutarate = N-acetyl-L-glutamate 5-semialdehyde + L-glutamate. Its pathway is amino-acid biosynthesis; L-arginine biosynthesis; N(2)-acetyl-L-ornithine from L-glutamate: step 4/4. This chain is Acetylornithine aminotransferase, found in Methanopyrus kandleri (strain AV19 / DSM 6324 / JCM 9639 / NBRC 100938).